A 562-amino-acid chain; its full sequence is Formate--tetrahydrofolate ligase (562 aa).

71–78 (TPAGEGKS) provides a ligand contact to ATP.

Belongs to the formate--tetrahydrofolate ligase family.

The enzyme catalyses (6S)-5,6,7,8-tetrahydrofolate + formate + ATP = (6R)-10-formyltetrahydrofolate + ADP + phosphate. It participates in one-carbon metabolism; tetrahydrofolate interconversion. This Bacillus cereus (strain G9842) protein is Formate--tetrahydrofolate ligase.